The primary structure comprises 229 residues: Cytochrome c oxidase subunit 2 (229 aa).

Residues 1 to 26 lie on the Mitochondrial intermembrane side of the membrane; it reads MSTWANLGLQDSASPLMEQLIFFHDH. The chain crosses the membrane as a helical span at residues 27-48; the sequence is ALLILVMITVLVGYLMFMLFFN. At 49–62 the chain is on the mitochondrial matrix side; it reads SYVNRFLLHGQLIE. Residues 63–82 traverse the membrane as a helical segment; that stretch reads MIWTILPAIILLFIAMPSLR. The Mitochondrial intermembrane segment spans residues 83 to 229; that stretch reads LLYLLDEINE…IKWISNSVNS (147 aa). The Cu cation site is built by histidine 161, cysteine 196, glutamate 198, cysteine 200, histidine 204, and methionine 207. Glutamate 198 contributes to the Mg(2+) binding site.

This sequence belongs to the cytochrome c oxidase subunit 2 family. As to quaternary structure, component of the cytochrome c oxidase (complex IV, CIV), a multisubunit enzyme composed of a catalytic core of 3 subunits and several supernumerary subunits. The complex exists as a monomer or a dimer and forms supercomplexes (SCs) in the inner mitochondrial membrane with ubiquinol-cytochrome c oxidoreductase (cytochrome b-c1 complex, complex III, CIII). Requires Cu cation as cofactor.

The protein localises to the mitochondrion inner membrane. The catalysed reaction is 4 Fe(II)-[cytochrome c] + O2 + 8 H(+)(in) = 4 Fe(III)-[cytochrome c] + 2 H2O + 4 H(+)(out). Functionally, component of the cytochrome c oxidase, the last enzyme in the mitochondrial electron transport chain which drives oxidative phosphorylation. The respiratory chain contains 3 multisubunit complexes succinate dehydrogenase (complex II, CII), ubiquinol-cytochrome c oxidoreductase (cytochrome b-c1 complex, complex III, CIII) and cytochrome c oxidase (complex IV, CIV), that cooperate to transfer electrons derived from NADH and succinate to molecular oxygen, creating an electrochemical gradient over the inner membrane that drives transmembrane transport and the ATP synthase. Cytochrome c oxidase is the component of the respiratory chain that catalyzes the reduction of oxygen to water. Electrons originating from reduced cytochrome c in the intermembrane space (IMS) are transferred via the dinuclear copper A center (CU(A)) of subunit 2 and heme A of subunit 1 to the active site in subunit 1, a binuclear center (BNC) formed by heme A3 and copper B (CU(B)). The BNC reduces molecular oxygen to 2 water molecules using 4 electrons from cytochrome c in the IMS and 4 protons from the mitochondrial matrix. This Drosophila affinis (Fruit fly) protein is Cytochrome c oxidase subunit 2 (mt:CoII).